The chain runs to 956 residues: DNA polymerase I (956 aa).

Residues 209–296 form the 5'-3' exonuclease domain; the sequence is VTVRQWVDYR…VTDLPLDIEF (88 aa).

Belongs to the DNA polymerase type-A family. In terms of assembly, single-chain monomer with multiple functions.

It carries out the reaction DNA(n) + a 2'-deoxyribonucleoside 5'-triphosphate = DNA(n+1) + diphosphate. Its function is as follows. A DNA polymerase, required for DNA repair after DNA damage induced by ionizing radiation (IR); this is not the major DNA polymerase. Following severe irradiation (7 kGy of gamma irradiation) genomic DNA is fragmented. DNA is progressively degraded for the first 1.5 hours after IR, in a step promoted by RecA and counterbalanced by DNA Pol I and Pol III, followed by massive DNA synthesis and genome reassembly in the next hour. Optimal priming of DNA synthesis requires both RecA and RadA, Pol III initiates DNA synthesis while both Pol I and Pol III are required for its continuation. May also have 5'-3' exonuclease activity. This chain is DNA polymerase I (polA), found in Deinococcus radiodurans (strain ATCC 13939 / DSM 20539 / JCM 16871 / CCUG 27074 / LMG 4051 / NBRC 15346 / NCIMB 9279 / VKM B-1422 / R1).